The sequence spans 180 residues: Molybdopterin synthase catalytic subunit (180 aa).

Residues 123-124, Lys-139, and 146-148 each bind substrate; these read HR and KLE. Residues 161-180 are disordered; sequence RDGQKGVKVEGGKEGVEAKH.

Belongs to the MoaE family. MOCS2B subfamily. As to quaternary structure, heterotetramer; composed of 2 small (MOCS2A) and 2 large (MOCS2B) subunits.

The protein localises to the cytoplasm. It catalyses the reaction 2 [molybdopterin-synthase sulfur-carrier protein]-C-terminal-Gly-aminoethanethioate + cyclic pyranopterin phosphate + H2O = molybdopterin + 2 [molybdopterin-synthase sulfur-carrier protein]-C-terminal Gly-Gly + 2 H(+). The protein operates within cofactor biosynthesis; molybdopterin biosynthesis. Catalytic subunit of the molybdopterin synthase complex, a complex that catalyzes the conversion of precursor Z into molybdopterin. Acts by mediating the incorporation of 2 sulfur atoms from thiocarboxylated MOCS2A into precursor Z to generate a dithiolene group. This Pyrenophora tritici-repentis (strain Pt-1C-BFP) (Wheat tan spot fungus) protein is Molybdopterin synthase catalytic subunit.